The chain runs to 145 residues: Cell wall synthesis protein CwsA (145 aa).

The chain crosses the membrane as a helical span at residues 104 to 124 (WIFAGIAAAILAGGAVAFSIV).

Belongs to the CwsA family. As to quaternary structure, interacts with CrgA and Wag31.

The protein resides in the cell membrane. Its function is as follows. Required for regulated cell division, cell wall synthesis and the maintenance of cell shape. This is Cell wall synthesis protein CwsA from Mycobacterium tuberculosis (strain ATCC 25618 / H37Rv).